The sequence spans 385 residues: ADP,ATP carrier protein 2, mitochondrial (385 aa).

Residues 1 to 74 constitute a mitochondrion transit peptide; that stretch reads MVEQTQHPTI…ATTTSPVFVQ (74 aa). 3 Solcar repeats span residues 82–175, 187–280, and 288–374; these read TNFA…FKRL, KWFA…VKPV, and DSFF…LQLI. 5 helical membrane passes run 84–111, 152–176, 185–205, 256–277, and 291–311; these read FAID…VKLL, TANV…KRLF, YWKW…SSLL, FNIS…YDSV, and FASF…SYPI. ADP contacts are provided by arginine 157 and lysine 169. Arginine 315 is an ADP binding site. Residues 315–320 are important for transport activity; the sequence is RRRMMM. The short motif at 315–320 is the Nucleotide carrier signature motif element; that stretch reads RRRMMM. A helical membrane pass occupies residues 351 to 371; sequence AGANILRAVAGAGVLAGYDKL.

It belongs to the mitochondrial carrier (TC 2.A.29) family. In terms of assembly, monomer.

The protein localises to the mitochondrion inner membrane. It catalyses the reaction ADP(in) + ATP(out) = ADP(out) + ATP(in). The matrix-open state (m-state) is inhibited by the membrane-permeable bongkrekic acid (BKA). The cytoplasmic-open state (c-state) is inhibited by the membrane-impermeable toxic inhibitor carboxyatractyloside (CATR). ADP:ATP antiporter that mediates import of ADP into the mitochondrial matrix for ATP synthesis, and export of ATP out to fuel the cell. Cycles between the cytoplasmic-open state (c-state) and the matrix-open state (m-state): operates by the alternating access mechanism with a single substrate-binding site intermittently exposed to either the cytosolic (c-state) or matrix (m-state) side of the inner mitochondrial membrane. The chain is ADP,ATP carrier protein 2, mitochondrial (AAC2) from Arabidopsis thaliana (Mouse-ear cress).